The chain runs to 306 residues: uncharacterized protein (306 aa).

The next 9 membrane-spanning stretches (helical) occupy residues 13–33, 53–73, 86–106, 112–132, 147–167, 177–197, 214–234, 246–268, and 272–294; these read VLLSQFLNGYEWAVPWIFAFI, PLPMILALFVLHIFMPLFAWG, ITGLTLAVVIPTGITSLIWAA, VGLTLSIILVDTVLSPLIVPL, WGMMKGLIVMVVIPSFLGMLF, AFVSSALSPFSKLCLMAVIAI, AGIAVTVFFIALTGYAAAWLI, VSLIFTGGMRNISAGAVLAVTFF, and VAVPVVIGMLFQQILAALFGYML.

It localises to the cell membrane. This is an uncharacterized protein from Bacillus subtilis (strain 168).